An 853-amino-acid polypeptide reads, in one-letter code: Aminotransferase PigE (853 aa).

Position 503-504 (503-504) interacts with pyridoxal 5'-phosphate; it reads GT. An N6-(pyridoxal phosphate)lysine modification is found at lysine 645. Threonine 680 is a pyridoxal 5'-phosphate binding site.

It belongs to the class-III pyridoxal-phosphate-dependent aminotransferase family. As to quaternary structure, homodimer. Pyridoxal 5'-phosphate serves as cofactor.

The protein operates within antibiotic biosynthesis; prodigiosin biosynthesis. Functionally, involved in the biosynthesis of 2-methyl-3-n-amyl-pyrrole (MAP), one of the terminal products involved in the biosynthesis of the red antibiotic prodigiosin (Pig). Catalyzes the transamination to the aldehyde group of 3-acetyloctanal, resulting in an aminoketone, which spontaneously cyclizes to yield the dihydro form of MAP (H2MAP). This Serratia sp. (strain FS14) protein is Aminotransferase PigE.